The sequence spans 165 residues: P2Y purinoceptor 4 (165 aa).

The helical transmembrane segment at serine 1–tyrosine 16 threads the bilayer. Residues alanine 17–lysine 30 lie on the Extracellular side of the membrane. Residues phenylalanine 31–serine 51 traverse the membrane as a helical segment. The Cytoplasmic segment spans residues valine 52–serine 74. The chain crosses the membrane as a helical span at residues leucine 75 to valine 95. The Extracellular portion of the chain corresponds to threonine 96–alanine 124. The N-linked (GlcNAc...) asparagine glycan is linked to asparagine 100. Residues valine 125–alanine 145 form a helical membrane-spanning segment. The Cytoplasmic segment spans residues arginine 146–leucine 165.

Belongs to the G-protein coupled receptor 1 family.

It localises to the cell membrane. Functionally, receptor for UTP and UDP coupled to G-proteins that activate a phosphatidylinositol-calcium second messenger system. This Cricetulus griseus (Chinese hamster) protein is P2Y purinoceptor 4 (P2RY4).